A 197-amino-acid polypeptide reads, in one-letter code: Dephospho-CoA kinase (197 aa).

In terms of domain architecture, DPCK spans 4-197 (RLGLTGSIGM…RQIRAGNIHA (194 aa)). Residue 12–17 (GMGKST) participates in ATP binding.

It belongs to the CoaE family.

It localises to the cytoplasm. The catalysed reaction is 3'-dephospho-CoA + ATP = ADP + CoA + H(+). It participates in cofactor biosynthesis; coenzyme A biosynthesis; CoA from (R)-pantothenate: step 5/5. In terms of biological role, catalyzes the phosphorylation of the 3'-hydroxyl group of dephosphocoenzyme A to form coenzyme A. The sequence is that of Dephospho-CoA kinase from Ruegeria pomeroyi (strain ATCC 700808 / DSM 15171 / DSS-3) (Silicibacter pomeroyi).